Here is a 167-residue protein sequence, read N- to C-terminus: Protein-export protein SecB (167 aa).

The protein belongs to the SecB family. Homotetramer, a dimer of dimers. One homotetramer interacts with 1 SecA dimer.

It is found in the cytoplasm. In terms of biological role, one of the proteins required for the normal export of preproteins out of the cell cytoplasm. It is a molecular chaperone that binds to a subset of precursor proteins, maintaining them in a translocation-competent state. It also specifically binds to its receptor SecA. This is Protein-export protein SecB from Wolbachia pipientis subsp. Culex pipiens (strain wPip).